Consider the following 85-residue polypeptide: ATP synthase subunit c (85 aa).

2 helical membrane passes run 10–30 and 53–73; these read IAVA…FGLL and FIVA…ALFF.

The protein belongs to the ATPase C chain family. As to quaternary structure, F-type ATPases have 2 components, F(1) - the catalytic core - and F(0) - the membrane proton channel. F(1) has five subunits: alpha(3), beta(3), gamma(1), delta(1), epsilon(1). F(0) has three main subunits: a(1), b(2) and c(10-14). The alpha and beta chains form an alternating ring which encloses part of the gamma chain. F(1) is attached to F(0) by a central stalk formed by the gamma and epsilon chains, while a peripheral stalk is formed by the delta and b chains.

The protein resides in the cell inner membrane. In terms of biological role, f(1)F(0) ATP synthase produces ATP from ADP in the presence of a proton or sodium gradient. F-type ATPases consist of two structural domains, F(1) containing the extramembraneous catalytic core and F(0) containing the membrane proton channel, linked together by a central stalk and a peripheral stalk. During catalysis, ATP synthesis in the catalytic domain of F(1) is coupled via a rotary mechanism of the central stalk subunits to proton translocation. Its function is as follows. Key component of the F(0) channel; it plays a direct role in translocation across the membrane. A homomeric c-ring of between 10-14 subunits forms the central stalk rotor element with the F(1) delta and epsilon subunits. This Pseudomonas syringae pv. syringae (strain B728a) protein is ATP synthase subunit c.